We begin with the raw amino-acid sequence, 312 residues long: Formate dehydrogenase iron-sulfur subunit (312 aa).

4Fe-4S ferredoxin-type domains follow at residues 35–65 (IAKL…SDIN), 97–129 (LEWL…QYAN), 130–159 (GIVD…MNPE), and 164–195 (YKCT…FGSK). Residues Cys44, Cys47, Cys50, Cys54, Cys106, Cys109, Cys114, Cys118, Cys139, Cys142, Cys145, Cys149, Cys166, Cys169, Cys181, and Cys185 each contribute to the [4Fe-4S] cluster site.

In terms of assembly, formate dehydrogenase is a membrane-bound complex, formed by subunits alpha, beta and gamma. [4Fe-4S] cluster is required as a cofactor.

It is found in the cell membrane. Functionally, allows to use formate as major electron donor during aerobic respiration. The beta chain is an electron transfer unit containing 4 cysteine clusters involved in the formation of iron-sulfur centers. Electrons are transferred from the gamma chain to the molybdenum cofactor of the alpha subunit. This chain is Formate dehydrogenase iron-sulfur subunit (fdxH), found in Haemophilus influenzae (strain ATCC 51907 / DSM 11121 / KW20 / Rd).